The chain runs to 456 residues: Bifunctional protein GlmU (456 aa).

Residues 1-229 (MLNSAMSVVI…ISETDGVNNR (229 aa)) form a pyrophosphorylase region. Residues 11–14 (LAAG), lysine 25, glutamine 76, 81–82 (GT), 103–105 (YGD), glycine 140, glutamate 154, asparagine 169, and asparagine 227 each bind UDP-N-acetyl-alpha-D-glucosamine. Residue aspartate 105 participates in Mg(2+) binding. Asparagine 227 serves as a coordination point for Mg(2+). The segment at 230 to 250 (LQLSRLERIYQAEQAEKLLLS) is linker. Positions 251 to 456 (GVMLRDPARF…QGWQRPVKKK (206 aa)) are N-acetyltransferase. UDP-N-acetyl-alpha-D-glucosamine is bound by residues arginine 333 and lysine 351. Histidine 363 functions as the Proton acceptor in the catalytic mechanism. Residues tyrosine 366 and asparagine 377 each coordinate UDP-N-acetyl-alpha-D-glucosamine. Acetyl-CoA contacts are provided by residues alanine 380, 386–387 (NY), serine 405, alanine 423, and arginine 440.

This sequence in the N-terminal section; belongs to the N-acetylglucosamine-1-phosphate uridyltransferase family. The protein in the C-terminal section; belongs to the transferase hexapeptide repeat family. As to quaternary structure, homotrimer. Requires Mg(2+) as cofactor.

It localises to the cytoplasm. It catalyses the reaction alpha-D-glucosamine 1-phosphate + acetyl-CoA = N-acetyl-alpha-D-glucosamine 1-phosphate + CoA + H(+). It carries out the reaction N-acetyl-alpha-D-glucosamine 1-phosphate + UTP + H(+) = UDP-N-acetyl-alpha-D-glucosamine + diphosphate. It functions in the pathway nucleotide-sugar biosynthesis; UDP-N-acetyl-alpha-D-glucosamine biosynthesis; N-acetyl-alpha-D-glucosamine 1-phosphate from alpha-D-glucosamine 6-phosphate (route II): step 2/2. It participates in nucleotide-sugar biosynthesis; UDP-N-acetyl-alpha-D-glucosamine biosynthesis; UDP-N-acetyl-alpha-D-glucosamine from N-acetyl-alpha-D-glucosamine 1-phosphate: step 1/1. Its pathway is bacterial outer membrane biogenesis; LPS lipid A biosynthesis. Catalyzes the last two sequential reactions in the de novo biosynthetic pathway for UDP-N-acetylglucosamine (UDP-GlcNAc). The C-terminal domain catalyzes the transfer of acetyl group from acetyl coenzyme A to glucosamine-1-phosphate (GlcN-1-P) to produce N-acetylglucosamine-1-phosphate (GlcNAc-1-P), which is converted into UDP-GlcNAc by the transfer of uridine 5-monophosphate (from uridine 5-triphosphate), a reaction catalyzed by the N-terminal domain. In Salmonella heidelberg (strain SL476), this protein is Bifunctional protein GlmU.